We begin with the raw amino-acid sequence, 190 residues long: Ribosome maturation factor RimP (190 aa).

The interval 159–190 (ELELAGGIPEGRVAPADADASEDEEVVEGLDK) is disordered. Residues 177–190 (DASEDEEVVEGLDK) show a composition bias toward acidic residues.

Belongs to the RimP family.

Its subcellular location is the cytoplasm. Its function is as follows. Required for maturation of 30S ribosomal subunits. In Rhodococcus opacus (strain B4), this protein is Ribosome maturation factor RimP.